Reading from the N-terminus, the 89-residue chain is Small ribosomal subunit protein uS17 (89 aa).

Belongs to the universal ribosomal protein uS17 family. As to quaternary structure, part of the 30S ribosomal subunit.

Functionally, one of the primary rRNA binding proteins, it binds specifically to the 5'-end of 16S ribosomal RNA. This chain is Small ribosomal subunit protein uS17, found in Xylella fastidiosa (strain M12).